The following is a 370-amino-acid chain: Popeye domain-containing 2 (370 aa).

2 helical membrane passes run 51 to 71 (ALYI…WGWL) and 78 to 98 (VFIW…HLIF). Positions 275 to 349 (PSPPGSEGGS…SGEDSTSLIL (75 aa)) are disordered. Positions 283–294 (GSASSPPRGSLG) are enriched in low complexity. Polar residues-rich tracts occupy residues 307–319 (NPGS…QPDQ) and 330–347 (QHWS…STSL).

This sequence belongs to the popeye family. In terms of tissue distribution, expressed in the heart and, slightly, in skeletal muscle.

The protein resides in the membrane. The protein localises to the cell membrane. It is found in the sarcolemma. Important for striated muscle differentiation and cardiac morphogenesis. Is also required for cardiac conduction system development, plays a regulatory function in heart rate dynamics mediated, at least in part, through cAMP-binding. The chain is Popeye domain-containing 2 from Danio rerio (Zebrafish).